The sequence spans 223 residues: Ubiquitin carboxyl-terminal hydrolase isozyme L1 (223 aa).

An N-acetylmethionine modification is found at methionine 1. In terms of domain architecture, UCH catalytic spans 2–221 (QLKPMEINPE…VRFSAVALCK (220 aa)). The tract at residues 5–10 (PMEINP) is interaction with ubiquitin. Residue cysteine 90 is the Nucleophile of the active site. Serine 125 carries the post-translational modification Phosphoserine. Histidine 161 acts as the Proton donor in catalysis. Positions 211-216 (EVRFSA) are interaction with ubiquitin. Cysteine 220 carries the S-farnesyl cysteine lipid modification. A propeptide spans 221-223 (KCA) (removed in mature form).

The protein belongs to the peptidase C12 family. Monomer. Homodimer. Interacts with COPS5 and SNCA. In terms of processing, O-glycosylated.

The protein localises to the cytoplasm. It is found in the endoplasmic reticulum membrane. The catalysed reaction is Thiol-dependent hydrolysis of ester, thioester, amide, peptide and isopeptide bonds formed by the C-terminal Gly of ubiquitin (a 76-residue protein attached to proteins as an intracellular targeting signal).. In terms of biological role, ubiquitin-protein hydrolase involved both in the processing of ubiquitin precursors and of ubiquitinated proteins. This enzyme is a thiol protease that recognizes and hydrolyzes a peptide bond at the C-terminal glycine of ubiquitin. Also binds to free monoubiquitin and may prevent its degradation in lysosomes. The homodimer may have ATP-independent ubiquitin ligase activity. The sequence is that of Ubiquitin carboxyl-terminal hydrolase isozyme L1 (UCHL1) from Monodelphis domestica (Gray short-tailed opossum).